The primary structure comprises 103 residues: Large ribosomal subunit protein uL24 (103 aa).

This sequence belongs to the universal ribosomal protein uL24 family. In terms of assembly, part of the 50S ribosomal subunit.

Functionally, one of two assembly initiator proteins, it binds directly to the 5'-end of the 23S rRNA, where it nucleates assembly of the 50S subunit. Its function is as follows. One of the proteins that surrounds the polypeptide exit tunnel on the outside of the subunit. In Lachnospira eligens (strain ATCC 27750 / DSM 3376 / VPI C15-48 / C15-B4) (Eubacterium eligens), this protein is Large ribosomal subunit protein uL24.